We begin with the raw amino-acid sequence, 311 residues long: MDVRQRLISSMVISLGLTIISEGIVLIGIASLLHISLFFIFPALVIFWLFQWIISPYVVGRGGYEVSPNDPQYGWLYNLVRRIAEESKIKPPRVFVIDAPYPNAFAYGNRLGGMRVGITLPLLNILDVDELTAVIAHEVGHIKHRDVEIGMTIGLIPTVLGYISTLLMNFGYLALFLAADEIELLFAIAALAIGFVIFVVTFILQIFVLWFNRLRESYADYNSFLVLGEGSKALATALAKIEIYMQNIRIDPFTGIIVTAPPVKVEEKDPHLLVEQWLRTKVSAFKDILSTHPYPARRAQMIYRLIYGSNI.

Helical transmembrane passes span 12–32 (VISL…IASL) and 35–55 (ISLF…WIIS). Residue histidine 137 participates in Zn(2+) binding. The active site involves glutamate 138. Histidine 141 is a Zn(2+) binding site. Helical transmembrane passes span 159–179 (VLGY…FLAA) and 184–204 (LLFA…TFIL). Glutamate 216 lines the Zn(2+) pocket.

It belongs to the peptidase M48B family. It depends on Zn(2+) as a cofactor.

Its subcellular location is the cell membrane. This Saccharolobus solfataricus (strain ATCC 35092 / DSM 1617 / JCM 11322 / P2) (Sulfolobus solfataricus) protein is Protease HtpX homolog 1.